The following is a 568-amino-acid chain: Periplasmic trehalase (568 aa).

Residues 1-39 form the signal peptide; it reads MPHVVARSGDVMSSAAPPSCTSLLGLSLSMFVAPCTLTA. Substrate contacts are provided by residues Arg169, 176–177, Asn213, 222–224, 294–296, and Gly327; these read WD, RSQ, and RPE. Residues Asp329 and Glu511 each act as proton donor/acceptor in the active site. Residue Glu526 coordinates substrate.

This sequence belongs to the glycosyl hydrolase 37 family.

The protein localises to the periplasm. The enzyme catalyses alpha,alpha-trehalose + H2O = alpha-D-glucose + beta-D-glucose. Provides the cells with the ability to utilize trehalose at high osmolarity by splitting it into glucose molecules that can subsequently be taken up by the phosphotransferase-mediated uptake system. The protein is Periplasmic trehalase of Xanthomonas oryzae pv. oryzae (strain MAFF 311018).